Consider the following 416-residue polypeptide: 46 kDa surface antigen (416 aa).

Positions 1–27 (MLRKKFLYSSAIYATSLASIIAFVAAG) are cleaved as a signal peptide. Cys-28 carries N-palmitoyl cysteine lipidation. The S-diacylglycerol cysteine moiety is linked to residue Cys-28.

The protein resides in the cell membrane. In Mesomycoplasma hyopneumoniae (strain 232) (Mycoplasma hyopneumoniae), this protein is 46 kDa surface antigen (p46).